A 273-amino-acid chain; its full sequence is Ribosomal RNA small subunit methyltransferase A (273 aa).

S-adenosyl-L-methionine is bound by residues N18, L20, G45, E66, D91, and N113.

Belongs to the class I-like SAM-binding methyltransferase superfamily. rRNA adenine N(6)-methyltransferase family. RsmA subfamily.

Its subcellular location is the cytoplasm. It catalyses the reaction adenosine(1518)/adenosine(1519) in 16S rRNA + 4 S-adenosyl-L-methionine = N(6)-dimethyladenosine(1518)/N(6)-dimethyladenosine(1519) in 16S rRNA + 4 S-adenosyl-L-homocysteine + 4 H(+). Its function is as follows. Specifically dimethylates two adjacent adenosines (A1518 and A1519) in the loop of a conserved hairpin near the 3'-end of 16S rRNA in the 30S particle. May play a critical role in biogenesis of 30S subunits. In Shigella boydii serotype 18 (strain CDC 3083-94 / BS512), this protein is Ribosomal RNA small subunit methyltransferase A.